A 335-amino-acid polypeptide reads, in one-letter code: Tryptophan--tRNA ligase (335 aa).

ATP is bound by residues 11–13 (QPT) and 19–20 (GN). Residues 12–20 (PTGNLHLGN) carry the 'HIGH' region motif. Aspartate 135 contributes to the L-tryptophan binding site. ATP contacts are provided by residues 147–149 (GED), valine 189, and 198–202 (KMSKS). Residues 198–202 (KMSKS) carry the 'KMSKS' region motif.

The protein belongs to the class-I aminoacyl-tRNA synthetase family. As to quaternary structure, homodimer.

It localises to the cytoplasm. It catalyses the reaction tRNA(Trp) + L-tryptophan + ATP = L-tryptophyl-tRNA(Trp) + AMP + diphosphate + H(+). Functionally, catalyzes the attachment of tryptophan to tRNA(Trp). This is Tryptophan--tRNA ligase from Nostoc sp. (strain PCC 7120 / SAG 25.82 / UTEX 2576).